A 201-amino-acid polypeptide reads, in one-letter code: Probable chemoreceptor glutamine deamidase CheD (201 aa).

The protein belongs to the CheD family.

It carries out the reaction L-glutaminyl-[protein] + H2O = L-glutamyl-[protein] + NH4(+). Probably deamidates glutamine residues to glutamate on methyl-accepting chemotaxis receptors (MCPs), playing an important role in chemotaxis. The protein is Probable chemoreceptor glutamine deamidase CheD of Chlorobium luteolum (strain DSM 273 / BCRC 81028 / 2530) (Pelodictyon luteolum).